Reading from the N-terminus, the 218-residue chain is Small ribosomal subunit protein uS4 (218 aa).

Residues 111 to 175 (RRLQTQVLRL…SPLKNESHPE (65 aa)) form the S4 RNA-binding domain. Residues 192–218 (KAAAEAKQAREKPPERGGGRRKRGGRR) are disordered. The span at 198–209 (KQAREKPPERGG) shows a compositional bias: basic and acidic residues.

It belongs to the universal ribosomal protein uS4 family. In terms of assembly, part of the 30S ribosomal subunit. Contacts protein S5. The interaction surface between S4 and S5 is involved in control of translational fidelity.

In terms of biological role, one of the primary rRNA binding proteins, it binds directly to 16S rRNA where it nucleates assembly of the body of the 30S subunit. Functionally, with S5 and S12 plays an important role in translational accuracy. The protein is Small ribosomal subunit protein uS4 of Methanosarcina acetivorans (strain ATCC 35395 / DSM 2834 / JCM 12185 / C2A).